A 260-amino-acid chain; its full sequence is MEAVPEKKKKVAAALGTLKKKKVPAVPETLKKKRRNFAELKVKRLRKKFALKTLRKARRKLIYEKAKHYHKEYRQMYRTEIRMARMARKAGNFYVPAEPKLAFVIRIRGINGVSPKVRKVLQLLRLRQIFNGTFVKLNKASVNMLRIVEPYIAWGYPNLKSVNELIYKRGYGKINKKRIALTDNSLVARSLGKFGIICMEDLIHEIYTVGKRFKEANNFLWPFKLSSPRGGMKKKTTHFVEGGDAGNREDQINRLIRRMN.

M1 carries the N-acetylmethionine modification. Repeat copies occupy residues 7–18 (KKKKVAAALGTL), 19–30 (KKKKVPAVPETL), 31–42 (KKKRRNFAELKV), 43–54 (KRLRKKFALKTL), and 55–66 (RKARRKLIYEKA). The segment at 7–66 (KKKKVAAALGTLKKKKVPAVPETLKKKRRNFAELKVKRLRKKFALKTLRKARRKLIYEKA) is 5 X 12 AA tandem repeats. The residue at position 29 (T29) is a Phosphothreonine. Residue K136 is modified to N6-acetyllysine. K139 is modified (N6-succinyllysine). Y151 carries the phosphotyrosine modification.

The protein belongs to the universal ribosomal protein uL30 family. In terms of assembly, component of the large ribosomal subunit. Homodimer. Interacts with DHX33.

Its subcellular location is the cytoplasm. Functionally, component of the large ribosomal subunit. The ribosome is a large ribonucleoprotein complex responsible for the synthesis of proteins in the cell. Binds to G-rich structures in 28S rRNA and in mRNAs. Plays a regulatory role in the translation apparatus; inhibits cell-free translation of mRNAs. The polypeptide is Large ribosomal subunit protein uL30 (Rpl7) (Rattus norvegicus (Rat)).